A 91-amino-acid polypeptide reads, in one-letter code: Large ribosomal subunit protein bL27 (91 aa).

Positions 1–21 (MAHKKSGGSSRNGRDSAGRRL) are disordered.

Belongs to the bacterial ribosomal protein bL27 family.

The protein is Large ribosomal subunit protein bL27 of Phenylobacterium zucineum (strain HLK1).